The sequence spans 337 residues: Adenine deaminase (337 aa).

Zn(2+)-binding residues include His-14, His-16, and His-194. The active-site Proton donor is the Glu-197. Asp-275 contacts Zn(2+). Substrate is bound at residue Asp-276.

This sequence belongs to the metallo-dependent hydrolases superfamily. Adenosine and AMP deaminases family. Adenine deaminase type 2 subfamily. Zn(2+) is required as a cofactor.

It catalyses the reaction adenine + H2O + H(+) = hypoxanthine + NH4(+). Catalyzes the hydrolytic deamination of adenine to hypoxanthine. Plays an important role in the purine salvage pathway and in nitrogen catabolism. The protein is Adenine deaminase of Vibrio parahaemolyticus serotype O3:K6 (strain RIMD 2210633).